The following is a 292-amino-acid chain: Peroxisomal 2,4-dienoyl-CoA reductase [(3E)-enoyl-CoA-producing] (292 aa).

A2 is subject to N-acetylalanine. NADP(+) contacts are provided by residues 35 to 40 (GGGSGI), 60 to 64 (RSLQK), and D86. Residue R60 participates in substrate binding. K64 bears the N6-acetyllysine mark. Residues R88, F118, and 126 to 128 (SFN) each bind substrate. An N6-acetyllysine modification is found at K151. NADP(+)-binding positions include K182 and 208 to 214 (PGAISGT). R219 lines the substrate pocket. A Phosphoserine modification is found at S287. The short motif at 290–292 (AKL) is the Microbody targeting signal element. K291 carries the N6-acetyllysine modification.

This sequence belongs to the short-chain dehydrogenases/reductases (SDR) family. 2,4-dienoyl-CoA reductase subfamily. In terms of assembly, monomer, dimer and oligomer.

It is found in the peroxisome. It catalyses the reaction a (2E,4Z)-dienoyl-CoA + NADPH + H(+) = a 4,5-saturated-(3E)-enoyl-CoA + NADP(+). It carries out the reaction a (2E,4E)-dienoyl-CoA + NADPH + H(+) = a 4,5-saturated-(3E)-enoyl-CoA + NADP(+). The enzyme catalyses (2E,4E)-hexadienoyl-CoA + NADPH + H(+) = (3E)-hexenoyl-CoA + NADP(+). The catalysed reaction is (2E,4E)-decadienoyl-CoA + NADPH + H(+) = (3E)-decenoyl-CoA + NADP(+). It catalyses the reaction (2E,4Z,7Z,10Z,13Z,16Z,19Z)-docosaheptaenoyl-CoA + NADPH + H(+) = (3E,7Z,10Z,13Z,16Z,19Z)-docosahexaenoyl-CoA + NADP(+). Auxiliary enzyme of beta-oxidation. Participates in the degradation of unsaturated fatty enoyl-CoA esters having double bonds in both even- and odd-numbered positions in peroxisome. Catalyzes the NADP-dependent reduction of 2,4-dienoyl-CoA to yield trans-3-enoyl-CoA. Has activity towards short and medium chain 2,4-dienoyl-CoAs, but also towards 2,4,7,10,13,16,19-docosaheptaenoyl-CoA, suggesting that it does not constitute a rate limiting step in the peroxisomal degradation of docosahexaenoic acid. This chain is Peroxisomal 2,4-dienoyl-CoA reductase [(3E)-enoyl-CoA-producing] (Decr2), found in Mus musculus (Mouse).